A 238-amino-acid chain; its full sequence is Pyridoxine 5'-phosphate synthase (238 aa).

N7 contributes to the 3-amino-2-oxopropyl phosphate binding site. 9-10 contacts 1-deoxy-D-xylulose 5-phosphate; sequence DH. 3-amino-2-oxopropyl phosphate is bound at residue R18. H43 serves as the catalytic Proton acceptor. 2 residues coordinate 1-deoxy-D-xylulose 5-phosphate: R45 and H50. The active-site Proton acceptor is E70. T100 is a binding site for 1-deoxy-D-xylulose 5-phosphate. The active-site Proton donor is the H190. 3-amino-2-oxopropyl phosphate-binding positions include G191 and 212-213; that span reads GH.

It belongs to the PNP synthase family. In terms of assembly, homooctamer; tetramer of dimers.

The protein localises to the cytoplasm. It catalyses the reaction 3-amino-2-oxopropyl phosphate + 1-deoxy-D-xylulose 5-phosphate = pyridoxine 5'-phosphate + phosphate + 2 H2O + H(+). It functions in the pathway cofactor biosynthesis; pyridoxine 5'-phosphate biosynthesis; pyridoxine 5'-phosphate from D-erythrose 4-phosphate: step 5/5. In terms of biological role, catalyzes the complicated ring closure reaction between the two acyclic compounds 1-deoxy-D-xylulose-5-phosphate (DXP) and 3-amino-2-oxopropyl phosphate (1-amino-acetone-3-phosphate or AAP) to form pyridoxine 5'-phosphate (PNP) and inorganic phosphate. This chain is Pyridoxine 5'-phosphate synthase, found in Prochlorococcus marinus (strain MIT 9312).